Consider the following 1075-residue polypeptide: Ataxin-2-like protein (1075 aa).

Met1 is modified (N-acetylmethionine). Residues 1–12 are compositionally biased toward low complexity; it reads MLKPQPLQQPSQ. A disordered region spans residues 1–115; sequence MLKPQPLQQP…KGPPQSPVFE (115 aa). The interval 98-121 is interaction with MPL; it reads SARGQSTGKGPPQSPVFEGVYNNS. Ser103 and Ser111 each carry phosphoserine. Phosphotyrosine is present on Tyr118. In terms of domain architecture, Sm spans 122-199; that stretch reads RMLHFLTAVV…VMLVHFRNVD (78 aa). Lys207 carries the N6-acetyllysine modification. Phosphoserine is present on Ser238. The residue at position 264 (Tyr264) is a Phosphotyrosine. A Phosphoserine modification is found at Ser306. Tyr309 is subject to Phosphotyrosine. Positions 316–328 are enriched in basic and acidic residues; the sequence is ENDDGRTEEEKHS. 6 disordered regions span residues 316 to 521, 551 to 697, 733 to 770, 820 to 849, 865 to 940, and 1022 to 1045; these read ENDD…LEPQ, QFKL…SIPV, VSNS…MMQA, SNPR…EQPT, ATQL…SSFP, and PYIG…ADDR. Residues 330 to 342 show a composition bias toward polar residues; sequence VQRQGSGRESPSL. Phosphoserine is present on residues Ser335 and Ser339. Residue Lys348 forms a Glycyl lysine isopeptide (Lys-Gly) (interchain with G-Cter in SUMO2) linkage. Tyr349 bears the Phosphotyrosine mark. Residue Arg361 is modified to Asymmetric dimethylarginine. Low complexity predominate over residues 363–380; the sequence is GVRCSSSRGGRPGLSSLP. Residues Ser391 and Ser409 each carry the phosphoserine modification. Positions 421–433 are enriched in polar residues; it reads TLSSPSNRPSGET. Ser449 carries the post-translational modification Phosphoserine. 2 stretches are compositionally biased toward low complexity: residues 450–462 and 471–485; these read PKSA…SASC and VPTS…SSVS. A phosphoserine mark is found at Ser493 and Ser496. Over residues 505–516 the composition is skewed to basic and acidic residues; the sequence is DVKELSTKEPGR. A phosphoserine mark is found at Ser557, Ser558, Ser559, and Ser563. Over residues 571–584 the composition is skewed to basic and acidic residues; the sequence is ILKEEPKGKEKEVD. A Phosphoserine modification is found at Ser594. At Thr632 the chain carries Phosphothreonine. A phosphoserine mark is found at Ser634, Ser674, Ser680, and Ser684. Composition is skewed to low complexity over residues 678 to 694 and 761 to 770; these read STST…STPS and PASAPPMMQA. The span at 874–898 shows a compositional bias: polar residues; that stretch reads QPATTPTGSQPQSQHAAPSPVQHQA. 2 stretches are compositionally biased toward low complexity: residues 931–940 and 1025–1037; these read SAQSPQSSFP and GHPQ…QAPG.

It belongs to the ataxin-2 family. Interacts with MPL/TPOR and EPOR and dissociates after ligand stimulation. Interacts with DDX6, G3BP1, and ATXN2. Interacts with PRMT1. Interacts with CIC and ATXN1. Thrombopoietin triggers the phosphorylation on tyrosine residues in a way that is dependent on MPL C-terminal domain. In terms of processing, asymmetrically dimethylated. Probably methylated by PRMT1. In terms of tissue distribution, expressed at high levels in thymus, lymph node, spleen, fetal kidney and adult testis. Constitutively associated with MPL and EPOR in hematopoietic cells.

It localises to the membrane. The protein localises to the cytoplasm. Its subcellular location is the nucleus speckle. The protein resides in the cytoplasmic granule. Functionally, involved in the regulation of stress granule and P-body formation. This chain is Ataxin-2-like protein (ATXN2L), found in Homo sapiens (Human).